Reading from the N-terminus, the 583-residue chain is Proline--tRNA ligase (583 aa).

It belongs to the class-II aminoacyl-tRNA synthetase family. ProS type 1 subfamily. As to quaternary structure, homodimer.

The protein resides in the cytoplasm. It catalyses the reaction tRNA(Pro) + L-proline + ATP = L-prolyl-tRNA(Pro) + AMP + diphosphate. Functionally, catalyzes the attachment of proline to tRNA(Pro) in a two-step reaction: proline is first activated by ATP to form Pro-AMP and then transferred to the acceptor end of tRNA(Pro). As ProRS can inadvertently accommodate and process non-cognate amino acids such as alanine and cysteine, to avoid such errors it has two additional distinct editing activities against alanine. One activity is designated as 'pretransfer' editing and involves the tRNA(Pro)-independent hydrolysis of activated Ala-AMP. The other activity is designated 'posttransfer' editing and involves deacylation of mischarged Ala-tRNA(Pro). The misacylated Cys-tRNA(Pro) is not edited by ProRS. This chain is Proline--tRNA ligase, found in Acidothermus cellulolyticus (strain ATCC 43068 / DSM 8971 / 11B).